Consider the following 117-residue polypeptide: Iron-sulfur cluster insertion protein ErpA (117 aa).

C45, C109, and C111 together coordinate iron-sulfur cluster.

Belongs to the HesB/IscA family. In terms of assembly, homodimer. Requires iron-sulfur cluster as cofactor.

Its function is as follows. Required for insertion of 4Fe-4S clusters for at least IspG. The chain is Iron-sulfur cluster insertion protein ErpA from Ruthia magnifica subsp. Calyptogena magnifica.